The following is a 576-amino-acid chain: Alpha-bisabolol synthase (576 aa).

(2E,6E)-farnesyl diphosphate contacts are provided by arginine 286, aspartate 323, aspartate 327, arginine 466, and asparagine 469. Mg(2+) contacts are provided by aspartate 323 and aspartate 327. The short motif at 323 to 327 (DDVYD) is the DDXXD motif element. Positions 469, 473, and 477 each coordinate Mg(2+).

Belongs to the terpene synthase family. Tpsb subfamily. Mg(2+) serves as cofactor. It depends on Mn(2+) as a cofactor.

Functionally, produces a mixture of beta-bisabolene and alpha-bisabolol, along with traces of alpha-bisabolene and farnesene isomers from (2E,6E)-farnesyl diphosphate in fragrance biosynthesis. In Santalum spicatum (Australian sandalwood), this protein is Alpha-bisabolol synthase.